Consider the following 242-residue polypeptide: UPF0309 protein BOV_A0853 (242 aa).

Residues A30–G209 enclose the SIS domain.

This sequence belongs to the UPF0309 family.

The chain is UPF0309 protein BOV_A0853 from Brucella ovis (strain ATCC 25840 / 63/290 / NCTC 10512).